Reading from the N-terminus, the 186-residue chain is Inner membrane-spanning protein YciB (186 aa).

Helical transmembrane passes span 10–30 (IILFFAAFKVWGIYVATAVAI), 47–67 (VEPLQWLSLGVIVLFGGATLL), 76–96 (WKPTVLYWLMGGTLLVGQLVF), 121–141 (WGWTGFFATMGVLNLWVAYNF), and 149–169 (FKLFGGIGLMFAFVIAQALYL).

Belongs to the YciB family.

The protein resides in the cell inner membrane. Functionally, plays a role in cell envelope biogenesis, maintenance of cell envelope integrity and membrane homeostasis. This Acidovorax sp. (strain JS42) protein is Inner membrane-spanning protein YciB.